We begin with the raw amino-acid sequence, 137 residues long: Nucleoside diphosphate kinase (137 aa).

Residues Lys9, Phe57, Arg85, Thr91, Arg102, and Asn112 each coordinate ATP. His115 serves as the catalytic Pros-phosphohistidine intermediate.

Belongs to the NDK family. As to quaternary structure, homotetramer. The cofactor is Mg(2+).

The protein resides in the cytoplasm. The catalysed reaction is a 2'-deoxyribonucleoside 5'-diphosphate + ATP = a 2'-deoxyribonucleoside 5'-triphosphate + ADP. It carries out the reaction a ribonucleoside 5'-diphosphate + ATP = a ribonucleoside 5'-triphosphate + ADP. Its function is as follows. Major role in the synthesis of nucleoside triphosphates other than ATP. The ATP gamma phosphate is transferred to the NDP beta phosphate via a ping-pong mechanism, using a phosphorylated active-site intermediate. This Syntrophotalea carbinolica (strain DSM 2380 / NBRC 103641 / GraBd1) (Pelobacter carbinolicus) protein is Nucleoside diphosphate kinase.